We begin with the raw amino-acid sequence, 363 residues long: Spermidine/putrescine import ATP-binding protein PotA (363 aa).

An ABC transporter domain is found at 9-239 (IDVRNAVKRY…PANRFVADFI (231 aa)). 41-48 (GPSGCGKT) contributes to the ATP binding site.

This sequence belongs to the ABC transporter superfamily. Spermidine/putrescine importer (TC 3.A.1.11.1) family. The complex is composed of two ATP-binding proteins (PotA), two transmembrane proteins (PotB and PotC) and a solute-binding protein (PotD).

The protein localises to the cell inner membrane. The enzyme catalyses ATP + H2O + polyamine-[polyamine-binding protein]Side 1 = ADP + phosphate + polyamineSide 2 + [polyamine-binding protein]Side 1.. Part of the ABC transporter complex PotABCD involved in spermidine/putrescine import. Responsible for energy coupling to the transport system. This is Spermidine/putrescine import ATP-binding protein PotA from Roseobacter denitrificans (strain ATCC 33942 / OCh 114) (Erythrobacter sp. (strain OCh 114)).